The following is a 388-amino-acid chain: Alcohol dehydrogenase-like 1 (388 aa).

Residues Cys-53, Thr-55, His-76, Cys-106, Cys-109, Cys-112, Cys-120, and Cys-185 each contribute to the Zn(2+) site. Residues Thr-55 and His-76 each coordinate an alcohol. Thr-55 is a binding site for NAD(+). NAD(+)-binding positions include Gly-210–Gly-215, Asp-234, Lys-239, Leu-304–Met-306, Phe-331, and Arg-381.

Belongs to the zinc-containing alcohol dehydrogenase family. Class-III subfamily. As to quaternary structure, homodimer. It depends on Zn(2+) as a cofactor.

The protein localises to the cytoplasm. The enzyme catalyses a primary alcohol + NAD(+) = an aldehyde + NADH + H(+). It carries out the reaction a secondary alcohol + NAD(+) = a ketone + NADH + H(+). The chain is Alcohol dehydrogenase-like 1 from Arabidopsis thaliana (Mouse-ear cress).